We begin with the raw amino-acid sequence, 218 residues long: Pyridoxine/pyridoxamine 5'-phosphate oxidase (218 aa).

Residues Arg-11–Tyr-14 and Lys-75 each bind substrate. FMN is bound by residues Arg-70–Lys-75, Tyr-85–Thr-86, Lys-92, and Gln-114. Substrate is bound by residues Tyr-132, Arg-136, and Ser-140. FMN is bound by residues Gln-149–Ser-150 and Trp-195. Position 201 to 203 (Arg-201 to His-203) interacts with substrate. Residue Arg-205 coordinates FMN.

The protein belongs to the pyridoxamine 5'-phosphate oxidase family. Homodimer. FMN serves as cofactor.

The catalysed reaction is pyridoxamine 5'-phosphate + O2 + H2O = pyridoxal 5'-phosphate + H2O2 + NH4(+). It catalyses the reaction pyridoxine 5'-phosphate + O2 = pyridoxal 5'-phosphate + H2O2. Its pathway is cofactor metabolism; pyridoxal 5'-phosphate salvage; pyridoxal 5'-phosphate from pyridoxamine 5'-phosphate: step 1/1. It participates in cofactor metabolism; pyridoxal 5'-phosphate salvage; pyridoxal 5'-phosphate from pyridoxine 5'-phosphate: step 1/1. Catalyzes the oxidation of either pyridoxine 5'-phosphate (PNP) or pyridoxamine 5'-phosphate (PMP) into pyridoxal 5'-phosphate (PLP). The sequence is that of Pyridoxine/pyridoxamine 5'-phosphate oxidase from Mycolicibacterium gilvum (strain PYR-GCK) (Mycobacterium gilvum (strain PYR-GCK)).